Here is a 309-residue protein sequence, read N- to C-terminus: Mas-related G-protein coupled receptor member E (309 aa).

Topologically, residues 1 to 21 are extracellular; that stretch reads MSLRVHTHSPSTQGDMAFNLT. Asn-19 carries N-linked (GlcNAc...) asparagine glycosylation. The chain crosses the membrane as a helical span at residues 22 to 42; it reads ILSLTELLSLGGLLGNGVALW. The Cytoplasmic portion of the chain corresponds to 43-59; the sequence is LLNQNVYRNPFSIYLLD. The chain crosses the membrane as a helical span at residues 60-80; sequence VACADLIFLCCHMVAIIPELL. Residues 81–91 are Extracellular-facing; the sequence is QDQLNFPEFVH. A helical membrane pass occupies residues 92–112; the sequence is ISLIMLRFFCYIVGLSLLVAI. Topologically, residues 113-132 are cytoplasmic; that stretch reads STEQCLATLFPSGYLCRRPR. The chain crosses the membrane as a helical span at residues 133-153; that stretch reads YLTTCVCAFIWVLCLLLDLLL. Residues 154 to 168 are Extracellular-facing; sequence SGACTQFFGAPSYHL. Residues 169–189 form a helical membrane-spanning segment; that stretch reads CGMLWLVVAVLLAALCCTMCV. The Cytoplasmic portion of the chain corresponds to 190–212; the sequence is TSLLLLLRVERGPERHQPRGFPT. A helical transmembrane segment spans residues 213 to 233; the sequence is LVLLVILLFLFCGLPFGIFWL. Topologically, residues 234 to 247 are extracellular; sequence SKNLSWHTPLYFYH. An N-linked (GlcNAc...) asparagine glycan is attached at Asn-236. The chain crosses the membrane as a helical span at residues 248–268; it reads FSFFMASVHSAAKPAIYFFLG. Over 269–309 the chain is Cytoplasmic; that stretch reads STPGQRFQEPLRLVLQRALGDEAELGAVREASQGGLVDMTV.

The protein belongs to the G-protein coupled receptor 1 family. Mas subfamily.

The protein localises to the cell membrane. Its function is as follows. Orphan receptor. May regulate nociceptor function and/or development, including the sensation or modulation of pain. The sequence is that of Mas-related G-protein coupled receptor member E (Mrgpre) from Rattus norvegicus (Rat).